Here is a 546-residue protein sequence, read N- to C-terminus: CTP synthase (546 aa).

Residues 1–265 (MTKYVFVTGG…DEIVCHKLNI (265 aa)) are amidoligase domain. Residue serine 13 coordinates CTP. Serine 13 contacts UTP. ATP is bound by residues 14–19 (SLGKGI) and aspartate 71. Mg(2+) is bound by residues aspartate 71 and glutamate 139. Residues 146–148 (DIE), 186–191 (KTKPTQ), and lysine 222 contribute to the CTP site. Residues 186-191 (KTKPTQ) and lysine 222 contribute to the UTP site. The 254-residue stretch at 290-543 (KIAFVGKYVD…VKAALANQKA (254 aa)) folds into the Glutamine amidotransferase type-1 domain. Residue glycine 351 coordinates L-glutamine. Cysteine 378 functions as the Nucleophile; for glutamine hydrolysis in the catalytic mechanism. L-glutamine is bound by residues 379 to 382 (LGMQ), glutamate 402, and arginine 469. Active-site residues include histidine 516 and glutamate 518.

It belongs to the CTP synthase family. Homotetramer.

The catalysed reaction is UTP + L-glutamine + ATP + H2O = CTP + L-glutamate + ADP + phosphate + 2 H(+). The enzyme catalyses L-glutamine + H2O = L-glutamate + NH4(+). It carries out the reaction UTP + NH4(+) + ATP = CTP + ADP + phosphate + 2 H(+). It participates in pyrimidine metabolism; CTP biosynthesis via de novo pathway; CTP from UDP: step 2/2. Allosterically activated by GTP, when glutamine is the substrate; GTP has no effect on the reaction when ammonia is the substrate. The allosteric effector GTP functions by stabilizing the protein conformation that binds the tetrahedral intermediate(s) formed during glutamine hydrolysis. Inhibited by the product CTP, via allosteric rather than competitive inhibition. In terms of biological role, catalyzes the ATP-dependent amination of UTP to CTP with either L-glutamine or ammonia as the source of nitrogen. Regulates intracellular CTP levels through interactions with the four ribonucleotide triphosphates. The chain is CTP synthase from Dechloromonas aromatica (strain RCB).